The chain runs to 21 residues: 20 kDa chaperonin, chloroplastic (21 aa).

The protein belongs to the GroES chaperonin family. As to quaternary structure, forms stable complexes with CPN60 in the presence of ATP.

The protein resides in the plastid. It is found in the chloroplast. In terms of biological role, seems to function only as a co-chaperone, along with cpn60, and in certain cases is essential for the discharge of biologically active proteins from cpn60. This chain is 20 kDa chaperonin, chloroplastic (CPN21), found in Pisum sativum (Garden pea).